A 245-amino-acid chain; its full sequence is Cytochrome c oxidase subunit 2 (245 aa).

Over 1 to 36 the chain is Mitochondrial intermembrane; it reads MYMLNNMLNDVPTPWGMFFQDSATPNMEGMMELHNN. The helical transmembrane segment at 37–56 threads the bilayer; the sequence is VMFYLCMMLGFVSYMLYNML. At 57–76 the chain is on the mitochondrial matrix side; sequence TTYNHSVLPYKYLYHGQFIE. Residues 77 to 101 form a helical membrane-spanning segment; that stretch reads IVWTTFPAMILLIIAFPSFILLYIC. The Mitochondrial intermembrane portion of the chain corresponds to 102–245; sequence DEVIAPAMTI…GEFLAWIDEQ (144 aa). Residues His180, Cys215, Glu217, Cys219, His223, and Met226 each coordinate Cu cation. Glu217 contacts Mg(2+).

It belongs to the cytochrome c oxidase subunit 2 family. As to quaternary structure, component of the cytochrome c oxidase (complex IV, CIV), a multisubunit enzyme composed of a catalytic core of 3 subunits and several supernumerary subunits. The complex exists as a monomer or a dimer and forms supercomplexes (SCs) in the inner mitochondrial membrane with ubiquinol-cytochrome c oxidoreductase (cytochrome b-c1 complex, complex III, CIII). It depends on Cu cation as a cofactor.

It localises to the mitochondrion inner membrane. The catalysed reaction is 4 Fe(II)-[cytochrome c] + O2 + 8 H(+)(in) = 4 Fe(III)-[cytochrome c] + 2 H2O + 4 H(+)(out). Functionally, component of the cytochrome c oxidase, the last enzyme in the mitochondrial electron transport chain which drives oxidative phosphorylation. The respiratory chain contains 3 multisubunit complexes succinate dehydrogenase (complex II, CII), ubiquinol-cytochrome c oxidoreductase (cytochrome b-c1 complex, complex III, CIII) and cytochrome c oxidase (complex IV, CIV), that cooperate to transfer electrons derived from NADH and succinate to molecular oxygen, creating an electrochemical gradient over the inner membrane that drives transmembrane transport and the ATP synthase. Cytochrome c oxidase is the component of the respiratory chain that catalyzes the reduction of oxygen to water. Electrons originating from reduced cytochrome c in the intermembrane space (IMS) are transferred via the dinuclear copper A center (CU(A)) of subunit 2 and heme A of subunit 1 to the active site in subunit 1, a binuclear center (BNC) formed by heme A3 and copper B (CU(B)). The BNC reduces molecular oxygen to 2 water molecules using 4 electrons from cytochrome c in the IMS and 4 protons from the mitochondrial matrix. This is Cytochrome c oxidase subunit 2 (COX2) from Dekkera bruxellensis (Brettanomyces custersii).